The following is a 294-amino-acid chain: Indole-3-glycerol phosphate synthase (294 aa).

It belongs to the TrpC family.

The enzyme catalyses 1-(2-carboxyphenylamino)-1-deoxy-D-ribulose 5-phosphate + H(+) = (1S,2R)-1-C-(indol-3-yl)glycerol 3-phosphate + CO2 + H2O. It participates in amino-acid biosynthesis; L-tryptophan biosynthesis; L-tryptophan from chorismate: step 4/5. The chain is Indole-3-glycerol phosphate synthase from Synechococcus sp. (strain RCC307).